Here is a 283-residue protein sequence, read N- to C-terminus: Putative sugar uptake protein BA_0200/GBAA_0200/BAS0200 (283 aa).

Helical transmembrane passes span Leu4 to Val21, Gly26 to Phe48, Ala52 to Gly71, Val84 to Ala106, Trp110 to Phe132, Leu151 to Ile173, Ala178 to Ser195, Ala208 to Val230, Phe234 to Gly253, and Gln260 to Gly279.

Belongs to the GRP transporter (TC 2.A.7.5) family.

The protein localises to the cell membrane. The sequence is that of Putative sugar uptake protein BA_0200/GBAA_0200/BAS0200 from Bacillus anthracis.